We begin with the raw amino-acid sequence, 149 residues long: Large ribosomal subunit protein bL9 (149 aa).

Belongs to the bacterial ribosomal protein bL9 family.

Binds to the 23S rRNA. This chain is Large ribosomal subunit protein bL9, found in Aliivibrio salmonicida (strain LFI1238) (Vibrio salmonicida (strain LFI1238)).